The primary structure comprises 194 residues: Metalloproteinase inhibitor 2 (194 aa).

Residue cysteine 1 coordinates Zn(2+). 2 involved in metalloproteinase-binding regions span residues 1–4 and 69–70; these read CSCS and SA. Disulfide bonds link cysteine 1–cysteine 72, cysteine 3–cysteine 101, cysteine 13–cysteine 126, cysteine 128–cysteine 175, cysteine 133–cysteine 138, and cysteine 146–cysteine 167. An NTR domain is found at 1 to 126; the sequence is CSCSPVHPQQ…SLNHRYQMGC (126 aa).

This sequence belongs to the protease inhibitor I35 (TIMP) family. As to quaternary structure, interacts (via the C-terminal) with MMP2 (via the C-terminal PEX domain); the interaction inhibits the MMP2 activity. The activity of TIMP2 is dependent on the presence of disulfide bonds.

The protein localises to the secreted. Its function is as follows. Complexes with metalloproteinases (such as collagenases) and irreversibly inactivates them by binding to their catalytic zinc cofactor. The protein is Metalloproteinase inhibitor 2 (TIMP2) of Oryctolagus cuniculus (Rabbit).